The chain runs to 383 residues: Ribosomal RNA large subunit methyltransferase G (383 aa).

Belongs to the methyltransferase superfamily. RlmG family.

The protein resides in the cytoplasm. The enzyme catalyses guanosine(1835) in 23S rRNA + S-adenosyl-L-methionine = N(2)-methylguanosine(1835) in 23S rRNA + S-adenosyl-L-homocysteine + H(+). In terms of biological role, specifically methylates the guanine in position 1835 (m2G1835) of 23S rRNA. The sequence is that of Ribosomal RNA large subunit methyltransferase G from Shewanella denitrificans (strain OS217 / ATCC BAA-1090 / DSM 15013).